Here is a 127-residue protein sequence, read N- to C-terminus: Small ribosomal subunit protein uS13 (127 aa).

A disordered region spans residues 92-127 (HRMGLPVRGQRTRTNARTRRGVRRTVAGKKKASAKK). Positions 101-127 (QRTRTNARTRRGVRRTVAGKKKASAKK) are enriched in basic residues.

This sequence belongs to the universal ribosomal protein uS13 family. Part of the 30S ribosomal subunit. Forms a loose heterodimer with protein S19. Forms two bridges to the 50S subunit in the 70S ribosome.

Located at the top of the head of the 30S subunit, it contacts several helices of the 16S rRNA. In the 70S ribosome it contacts the 23S rRNA (bridge B1a) and protein L5 of the 50S subunit (bridge B1b), connecting the 2 subunits; these bridges are implicated in subunit movement. Contacts the tRNAs in the A and P-sites. The protein is Small ribosomal subunit protein uS13 of Trichodesmium erythraeum (strain IMS101).